The following is a 77-amino-acid chain: Translation initiation factor IF-1, chloroplastic (77 aa).

Residues 1-71 enclose the S1-like domain; that stretch reads MKEQKLIHEG…TRGRIIYRLR (71 aa).

It belongs to the IF-1 family. As to quaternary structure, component of the 30S ribosomal translation pre-initiation complex which assembles on the 30S ribosome in the order IF-2 and IF-3, IF-1 and N-formylmethionyl-tRNA(fMet); mRNA recruitment can occur at any time during PIC assembly.

Its subcellular location is the plastid. The protein localises to the chloroplast. One of the essential components for the initiation of protein synthesis. Stabilizes the binding of IF-2 and IF-3 on the 30S subunit to which N-formylmethionyl-tRNA(fMet) subsequently binds. Helps modulate mRNA selection, yielding the 30S pre-initiation complex (PIC). Upon addition of the 50S ribosomal subunit IF-1, IF-2 and IF-3 are released leaving the mature 70S translation initiation complex. This Phalaenopsis aphrodite subsp. formosana (Moth orchid) protein is Translation initiation factor IF-1, chloroplastic.